Consider the following 397-residue polypeptide: MLSQFFPHIKEKPLSERVKSRDAFVYLDRVMWSFGWTVPENKRWDLHYKLWSTFVTLLIFILLPISVSVEYIQRFKTFSAGEFLSSIQIGVNMYGSSFKSYLTMMGYKKRQEAKMSLDELDKRCVCDEERTIVHRHVALGNFCYIFYHIAYTSFLISNFLSFIMKRIHAWRMYFPYVDPEKQFYISSIAEVILRGWAVFMDLCTDVCPLISMVIARCHITLLKQRLRNLRSEPGRTEDEYLKELADCVRDHRLILDYVDALRSVFSGTIFVQFLLIGIVLGLSMINIMFFSTLSTGVAVVLFMSCVSMQTFPFCYLCNMIMDDCQEMADSLFQSDWTSADRRYKSTLVYFLHNLQQPIILTAGGVFPISMQTNLNMVKLAFTVVTIVKQFNLAEKFQ.

The Cytoplasmic portion of the chain corresponds to 1–49; that stretch reads MLSQFFPHIKEKPLSERVKSRDAFVYLDRVMWSFGWTVPENKRWDLHYK. Residues 50–70 form a helical membrane-spanning segment; that stretch reads LWSTFVTLLIFILLPISVSVE. The Extracellular segment spans residues 71 to 85; the sequence is YIQRFKTFSAGEFLS. The helical transmembrane segment at 86–105 threads the bilayer; that stretch reads SIQIGVNMYGSSFKSYLTMM. Residues 106–143 are Cytoplasmic-facing; the sequence is GYKKRQEAKMSLDELDKRCVCDEERTIVHRHVALGNFC. The helical transmembrane segment at 144-164 threads the bilayer; that stretch reads YIFYHIAYTSFLISNFLSFIM. Residues 165-194 are Extracellular-facing; it reads KRIHAWRMYFPYVDPEKQFYISSIAEVILR. The helical transmembrane segment at 195-215 threads the bilayer; the sequence is GWAVFMDLCTDVCPLISMVIA. Topologically, residues 216–268 are cytoplasmic; that stretch reads RCHITLLKQRLRNLRSEPGRTEDEYLKELADCVRDHRLILDYVDALRSVFSGT. The helical transmembrane segment at 269–289 threads the bilayer; that stretch reads IFVQFLLIGIVLGLSMINIMF. Over 290-295 the chain is Extracellular; sequence FSTLST. A helical transmembrane segment spans residues 296–316; the sequence is GVAVVLFMSCVSMQTFPFCYL. Residues 317–347 are Cytoplasmic-facing; the sequence is CNMIMDDCQEMADSLFQSDWTSADRRYKSTL. A helical membrane pass occupies residues 348 to 368; sequence VYFLHNLQQPIILTAGGVFPI. The Extracellular portion of the chain corresponds to 369-397; it reads SMQTNLNMVKLAFTVVTIVKQFNLAEKFQ.

It belongs to the insect chemoreceptor superfamily. Heteromeric odorant receptor channel (TC 1.A.69) family. Or2a subfamily. Interacts with Orco, via conserved C-terminal cytoplasmic loops. Complexes exist early in the endomembrane system in olfactory sensory neurons (OSNs), coupling these complexes to the conserved ciliary trafficking pathway. As to expression, expressed with Orco in 20-22 sensory neurons on the medial-proximal edge of the antenna. This expression pattern matches the distribution of the large sensilla basiconica. Expression is first seen at 60 hours APF in a subset of cells restricted to a subregion of the developing antenna. Expression continues throughout antennal development. Expressed in the ab3A neuron which responds to ethyl butyrate.

The protein localises to the cell membrane. Its function is as follows. Odorant receptor which mediates acceptance or avoidance behavior, depending on its substrates. The odorant receptor repertoire encodes a large collection of odor stimuli that vary widely in identity, intensity, and duration. Involved in the behavioral responses to esters. Complexes with Orco to form odorant-sensing units, providing sensitive and prolonged odorant signaling and calcium permeability. They are necessary and sufficient to promote functional reconstitution of odor-evoked signaling in sensory neurons that normally respond only to carbon dioxide. The protein is Odorant receptor 22b (Or22b) of Drosophila melanogaster (Fruit fly).